A 231-amino-acid polypeptide reads, in one-letter code: Acyl-protein thioesterase 2 (231 aa).

Cys-2 carries the S-palmitoyl cysteine lipid modification. Ser-82 bears the Phosphoserine mark. Active-site charge relay system residues include Ser-122, Asp-176, and His-210.

Belongs to the AB hydrolase superfamily. AB hydrolase 2 family. As to expression, expressed in various breast cancer cell lines.

It is found in the cytoplasm. It catalyses the reaction S-hexadecanoyl-L-cysteinyl-[protein] + H2O = L-cysteinyl-[protein] + hexadecanoate + H(+). It carries out the reaction prostaglandin E2 1-glyceryl ester + H2O = prostaglandin E2 + glycerol + H(+). The enzyme catalyses 1-hexadecanoyl-sn-glycero-3-phosphocholine + H2O = sn-glycerol 3-phosphocholine + hexadecanoate + H(+). The catalysed reaction is 1-octadecanoyl-sn-glycero-3-phosphocholine + H2O = octadecanoate + sn-glycerol 3-phosphocholine + H(+). It catalyses the reaction 1-hexadecanoyl-sn-glycero-3-phosphate + H2O = sn-glycerol 3-phosphate + hexadecanoate + H(+). It carries out the reaction 1-hexadecanoyl-sn-glycero-3-phospho-L-serine + H2O = sn-glycero-3-phospho-L-serine + hexadecanoate + H(+). With respect to regulation, inhibited by compound 1 or (5,5-Dioxido-4H-thieno[3,2-c]thiochromen-2-yl)(4-(4-methoxyphenyl)piperazin-1-yl)methanone. Functionally, acts as an acyl-protein thioesterase hydrolyzing fatty acids from S-acylated cysteine residues in proteins such as trimeric G alpha proteins, GSDMD, GAP43, ZDHHC6 or HRAS. Deacylates GAP43. Mediates depalmitoylation of ZDHHC6. Has lysophospholipase activity. Hydrolyzes prostaglandin glycerol esters (PG-Gs) in the following order prostaglandin D2-glycerol ester (PGD2-G) &gt; prostaglandin E2 glycerol ester (PGE2-G) &gt; prostaglandin F2-alpha-glycerol ester (PGF2-alpha-G). Hydrolyzes 1-arachidonoylglycerol but not 2-arachidonoylglycerol or arachidonoylethanolamide. The sequence is that of Acyl-protein thioesterase 2 (LYPLA2) from Homo sapiens (Human).